The sequence spans 493 residues: Cytoplasmic tRNA 2-thiolation protein 2 (493 aa).

The residue at position 489 (Ser-489) is a Phosphoserine.

The protein belongs to the CTU2/NCS2 family. As to quaternary structure, interacts with NCS6 and URM1. May act by forming a heterodimer with NCS6.

Its subcellular location is the cytoplasm. The protein operates within tRNA modification; 5-methoxycarbonylmethyl-2-thiouridine-tRNA biosynthesis. Its function is as follows. Plays a central role in 2-thiolation of mcm(5)S(2)U at tRNA wobble positions of tRNA(Lys), tRNA(Glu) and tRNA(Gln). May act by forming a heterodimer with NCS6 that ligates sulfur from thiocarboxylated URM1 onto the uridine of tRNAs at wobble position. Prior mcm(5) tRNA modification by the elongator complex is required for 2-thiolation. May also be involved in protein urmylation. This chain is Cytoplasmic tRNA 2-thiolation protein 2, found in Saccharomyces cerevisiae (strain YJM789) (Baker's yeast).